The following is a 215-amino-acid chain: Protein GET1 (215 aa).

The Lumenal portion of the chain corresponds to 1–4 (MINL). A helical transmembrane segment spans residues 5–24 (ALVIFLCTLLNQIVSWVGKS). The Cytoplasmic portion of the chain corresponds to 25-108 (VLQEIAFTAY…SFSKKFSTLL (84 aa)). Residues 73 to 94 (AKLRRKLDKGLADLEKTNNTLS) adopt a coiled-coil conformation. A helical transmembrane segment spans residues 109 to 129 (WLMTTGAQFLLSWWFRKQPIF). The Lumenal portion of the chain corresponds to 130 to 153 (WLPEGWVPYPVAWLLSFPSAPIGS). The chain crosses the membrane as a helical span at residues 154-170 (VSSGAWGAICRRVLSTL). Over 171 to 215 (QEIIQSLLAPSPAATGPVPTGPSSAKNDQPEAKIEALALEHEKLD) the chain is Cytoplasmic. Residues 182-202 (PAATGPVPTGPSSAKNDQPEA) are disordered.

The protein belongs to the WRB/GET1 family. In terms of assembly, interacts with GET3.

It is found in the endoplasmic reticulum membrane. In terms of biological role, required for the post-translational delivery of tail-anchored (TA) proteins to the endoplasmic reticulum. Acts as a membrane receptor for soluble GET3, which recognizes and selectively binds the transmembrane domain of TA proteins in the cytosol. This Cryptococcus neoformans var. neoformans serotype D (strain JEC21 / ATCC MYA-565) (Filobasidiella neoformans) protein is Protein GET1.